We begin with the raw amino-acid sequence, 374 residues long: LRR repeats and ubiquitin-like domain-containing protein At2g30105 (374 aa).

Residues 13–87 (IKLTVKFGGK…LMLMASQGLH (75 aa)) form the Ubiquitin-like domain. 9 LRR repeats span residues 128–151 (WKATGVIALAQANLKEIPEEVWDC), 152–175 (GSGVRVLDISENFIKEVPAKISSF), 177–200 (SMQKLFLQGNGLSDESIQWEGIAS), 201–224 (LKRLMLLSISHNNLTVLPSAMGSL), 225–248 (TSLRQLDVTNNKLTSLPNELGLLT), 250–270 (LEILKANNNRITSLPESIGNC), 272–293 (FLMEVDLSANIISELPETFTKL), 294–316 (RNLKTLELNNTGLKTLPSALFKM), and 318–340 (LQLSTLGLHNTEITVEFLRQFEG).

The protein is LRR repeats and ubiquitin-like domain-containing protein At2g30105 of Arabidopsis thaliana (Mouse-ear cress).